The primary structure comprises 124 residues: Small ribosomal subunit protein uS12c (124 aa).

Residues 1–28 (MPTFQQLVRSARKPHAKKTKSPALQGCP) form a disordered region. Residues 10-20 (SARKPHAKKTK) show a composition bias toward basic residues.

Belongs to the universal ribosomal protein uS12 family. As to quaternary structure, part of the 30S ribosomal subunit.

The protein resides in the plastid. Its function is as follows. With S4 and S5 plays an important role in translational accuracy. Located at the interface of the 30S and 50S subunits. The protein is Small ribosomal subunit protein uS12c (rps12) of Prototheca wickerhamii.